The primary structure comprises 552 residues: Two-component response regulator ARR10 (552 aa).

Residues 18–133 form the Response regulatory domain; the sequence is RVLAVDDDQT…ELKNIWQHVV (116 aa). Position 69 is a 4-aspartylphosphate (D69). Residues 139 to 181 form a disordered region; sequence KKNKSNVSNGSGNCDKANRKRKEQYEEEEEEERGNDNDDPTAQ. Residues 151-173 adopt a coiled-coil conformation; the sequence is NCDKANRKRKEQYEEEEEEERGN. Positions 163-177 are enriched in acidic residues; that stretch reads YEEEEEEERGNDNDD. A Nuclear localization signal motif is present at residues 182 to 185; sequence KKPR. The segment at residues 185-235 is a DNA-binding region (myb-like GARP); that stretch reads RVLWTHELHNKFLAAVDHLGVERAVPKKILDLMNVDKLTRENVASHLQKFR.

It belongs to the ARR family. Type-B subfamily. In terms of assembly, binds the target DNA as a monomer. Post-translationally, two-component system major event consists of a His-to-Asp phosphorelay between a sensor histidine kinase (HK) and a response regulator (RR). In plants, the His-to-Asp phosphorelay involves an additional intermediate named Histidine-containing phosphotransfer protein (HPt). This multistep phosphorelay consists of a His-Asp-His-Asp sequential transfer of a phosphate group between first a His and an Asp of the HK protein, followed by the transfer to a conserved His of the HPt protein and finally the transfer to an Asp in the receiver domain of the RR protein. As to expression, detected in the whole plant. Predominantly expressed in roots and leaves.

It localises to the nucleus. Transcriptional activator that binds specifically to the DNA sequence 5'-[AG]GATT-3'. Functions as a response regulator involved in His-to-Asp phosphorelay signal transduction system. Phosphorylation of the Asp residue in the receiver domain activates the ability of the protein to promote the transcription of target genes. Could directly activate some type-A response regulators in response to cytokinins. The sequence is that of Two-component response regulator ARR10 (ARR10) from Arabidopsis thaliana (Mouse-ear cress).